Reading from the N-terminus, the 623-residue chain is Putative disease resistance protein At5g47280 (623 aa).

NB-ARC domains are found at residues 2–51 (LFNL…VSQS) and 119–249 (VDPR…NMLV). 16–23 (GMIGSGKT) contacts ATP. LRR repeat units follow at residues 488–511 (SLNSISITNCPNIKELPKNISKLQ), 512–534 (ALQLLRLYACPELKSLPVEICEL), 536–558 (RLVYVDISHCLSLSSLPEKIGNV), and 560–581 (TLEKIDMRECSLSSIPSSAVSL).

This sequence belongs to the disease resistance NB-LRR family.

Functionally, potential disease resistance protein. The polypeptide is Putative disease resistance protein At5g47280 (Arabidopsis thaliana (Mouse-ear cress)).